We begin with the raw amino-acid sequence, 407 residues long: tRNA (uracil(54)-C(5))-methyltransferase (407 aa).

[4Fe-4S] cluster is bound by residues Cys61, Cys67, Cys70, and Cys137. S-adenosyl-L-methionine-binding positions include Gln253, Tyr279, Thr284, 300 to 301 (DS), Asp327, and Asp341. Catalysis depends on Cys368, which acts as the Nucleophile. Glu400 functions as the Proton acceptor in the catalytic mechanism.

The protein belongs to the class I-like SAM-binding methyltransferase superfamily. RNA M5U methyltransferase family.

The enzyme catalyses uridine(54) in tRNA + S-adenosyl-L-methionine = 5-methyluridine(54) in tRNA + S-adenosyl-L-homocysteine + H(+). Its function is as follows. Catalyzes the formation of 5-methyl-uridine at position 54 (m5U54) in tRNA. This is tRNA (uracil(54)-C(5))-methyltransferase from Pyrococcus horikoshii (strain ATCC 700860 / DSM 12428 / JCM 9974 / NBRC 100139 / OT-3).